The primary structure comprises 633 residues: Molybdenum cofactor biosynthesis protein 1 (633 aa).

The molybdenum cofactor biosynthesis protein A stretch occupies residues 1-380 (MAAQPVSRVV…QMKNRPMILI (380 aa)). S61 is modified (phosphoserine). Residues 61 to 295 (SFGRHHSYLR…AKAFKIPGFR (235 aa)) enclose the Radical SAM core domain. R70 is a GTP binding site. The [4Fe-4S] cluster site is built by C77 and C81. Residue Y83 participates in S-adenosyl-L-methionine binding. C84 lines the [4Fe-4S] cluster pocket. GTP is bound at residue R120. G124 serves as a coordination point for S-adenosyl-L-methionine. Position 151 (T151) interacts with GTP. S175 lines the S-adenosyl-L-methionine pocket. The residue at position 195 (K195) is an N6-acetyllysine. Position 212 (K212) interacts with GTP. M246 lines the S-adenosyl-L-methionine pocket. Positions 309 and 312 each coordinate [4Fe-4S] cluster. Residue 314 to 316 (RLR) coordinates GTP. Residue C326 coordinates [4Fe-4S] cluster. A molybdenum cofactor biosynthesis protein C region spans residues 410 to 633 (VSFSSQMVTL…GGQRGDFHRT (224 aa)). The tract at residues 446–480 (SSHLDSDANPKCLSPTEPQAPAASSGPLPDSDQLT) is disordered. K525 is modified (N6-acetyllysine). D603 serves as the catalytic For molybdenum cofactor biosynthesis protein C activity.

In the C-terminal section; belongs to the MoaC family. It in the N-terminal section; belongs to the radical SAM superfamily. MoaA family. Isoform MOCS1A and isoform MOCS1B probably form a heterooligomer. Requires [4Fe-4S] cluster as cofactor.

It catalyses the reaction GTP + AH2 + S-adenosyl-L-methionine = (8S)-3',8-cyclo-7,8-dihydroguanosine 5'-triphosphate + 5'-deoxyadenosine + L-methionine + A + H(+). It carries out the reaction (8S)-3',8-cyclo-7,8-dihydroguanosine 5'-triphosphate = cyclic pyranopterin phosphate + diphosphate. Its pathway is cofactor biosynthesis; molybdopterin biosynthesis. In terms of biological role, isoform MOCS1A and isoform MOCS1B probably form a complex that catalyzes the conversion of 5'-GTP to cyclic pyranopterin monophosphate (cPMP). MOCS1A catalyzes the cyclization of GTP to (8S)-3',8-cyclo-7,8-dihydroguanosine 5'-triphosphate and MOCS1B catalyzes the subsequent conversion of (8S)-3',8-cyclo-7,8-dihydroguanosine 5'-triphosphate to cPMP. The chain is Molybdenum cofactor biosynthesis protein 1 (MOCS1) from Bos taurus (Bovine).